The chain runs to 563 residues: MTKTVEMVITGAQVLNVYTREFEATSLWIDHGRIISNLRDEPYIAAQHVDATGQWIVPGMIDAHVHMESSMVAPSELGKVLLQHGVTTIATDPHELANVAGIAGIQYLIDDARQTPLDVCFMLPSSVPCVPFDDNGATLHAADLRPLYQQSEVRGLAEVMDYGAVARGDTDTLAKISDAYAYGYHADGHAAGLNAHQLNVMRNAGLDTDHECMTVAEAQDRVRAGMAVFLREGTVERDVLPTIGAVTEANASRFAFCTDDKMISDLLTEGSIDYNVRLAMQSGMRPELAYTLASLNGAMAHRLSDRGSLSAGQLADLVVLDDLEHVRIARTMKRGQWILPSTTKPLPFTATRVQHHAQLADFQLPLATGLANVIGVQPNHIETDHLTLPIDATQNFEADCQRDILKMVVIERHHNTGKVGVGLVHGFALKQGAIAGTVAHDAHNIVAVGTSDAAILRAVAQITQDNGGIAVVDNEQVLATMPLAIGGLLSAASYQKVAEQLAELKRAYEVISERPLSFDPFITLSFLTLPVIPTLKLTARGLFDYATFDFIPVAIQDNQRQTV.

The protein belongs to the metallo-dependent hydrolases superfamily. Adenine deaminase family. The cofactor is Mn(2+).

The catalysed reaction is adenine + H2O + H(+) = hypoxanthine + NH4(+). This chain is Adenine deaminase, found in Lactiplantibacillus plantarum (strain ATCC BAA-793 / NCIMB 8826 / WCFS1) (Lactobacillus plantarum).